We begin with the raw amino-acid sequence, 520 residues long: Ribonuclease Y (520 aa).

The helical transmembrane segment at 3–23 threads the bilayer; that stretch reads IVIVVISILLALIVGIVVGYL. Over residues 81–118 the composition is skewed to basic and acidic residues; the sequence is RMEAQKQENRLMQKEENLDRKSETLDKRESSLESKEQS. A disordered region spans residues 81-125; sequence RMEAQKQENRLMQKEENLDRKSETLDKRESSLESKEQSLTEQQQQ. In terms of domain architecture, KH spans 210–273; that stretch reads TVSVVNLPND…EIARMALEKL (64 aa). The HD domain maps to 336–429; that stretch reads GLKHSAEVAY…VAAADALSAA (94 aa).

This sequence belongs to the RNase Y family.

It localises to the cell membrane. Endoribonuclease that initiates mRNA decay. The chain is Ribonuclease Y from Oceanobacillus iheyensis (strain DSM 14371 / CIP 107618 / JCM 11309 / KCTC 3954 / HTE831).